Here is a 324-residue protein sequence, read N- to C-terminus: Short chain dehydrogenase/reductase dmxR8 (324 aa).

Positions 33, 58, 83, and 110 each coordinate NADP(+). Residue S163 is the Proton donor of the active site. Y200 and K204 together coordinate NADP(+). Catalysis depends on Y200, which acts as the Proton acceptor. Residue K204 is the Lowers pKa of active site Tyr of the active site.

Belongs to the short-chain dehydrogenases/reductases (SDR) family.

It participates in secondary metabolite biosynthesis. Short chain dehydrogenase; part of the gene cluster that mediates the biosynthesis of the dimeric xanthones cryptosporioptides. The pathway begins with the synthesis of atrochrysone thioester by the polyketide synthase dmx-nrPKS. The atrochrysone carboxyl ACP thioesterase dmxR1 then breaks the thioester bond and releases the atrochrysone carboxylic acid from dmx-nrPKS. Atrochrysone carboxylic acid is decarboxylated by the decarboxylase dmxR15, and oxidized by the anthrone oxygenase dmxR16 to yield emodin. Emodin is then reduced to emodin hydroquinone by the oxidoreductase dmxR7. A-ring reduction by the short chain dehydrogenase dmxR18, dehydration by the scytalone dehydratase-like protein dmxR17 and probable spontaneous re-oxidation, results in overall deoxygenation to chrysophanol. Baeyer-Villiger oxidation by the Baeyer-Villiger monooxygenase (BVMO) dmxR6 then yields monodictylactone in equilibrium with monodictyphenone. In the case of the cryptosporioptides biosynthesis, monodictylactone is reduced at C-12 to an alcohol (by the short chain dehydrogenases dmxR12 or dmxR8) and hydroxylated at C-5 by dmxR9, yielding the electron-rich aromatic which could eliminate H(2)O to form the ortho-quinonemethide, followed by tautomerisation to paraquinone and complete the formal reduction to produce the 10-methylgroup. Conjugate addition of C-4a-OH to the resulting paraquinone by the monooxygenase dmxR10 then gives cyclohexadienone, which is then reduced at C-5 by the short chain dehydrogenase dmxR3 to give the dihydroxanthone. The 6,7-epoxide in the cryptosporioptides could be introduced by the cytochrome P450 monooxygenase dmxL3. The highly reducing PKS dmxL2 manufactures butyrate, which is further carboxylated by dmxL1 to form ethylmalonate. It is not yet clear whether the carboxylation occurs while the butyrate is attached to the ACP of dmxL2, but this unusual fungal metabolite could then be esterified to O-5 by the O-acetyltransferase dmxR13. Finally, dimerization performed by dmxR5 gives the observed dimers cryptosporioptides A, B and C as the final products of the pathway. This chain is Short chain dehydrogenase/reductase dmxR8, found in Cryptosporiopsis sp. (strain 8999).